An 89-amino-acid polypeptide reads, in one-letter code: Small ribosomal subunit protein uS15 (89 aa).

Belongs to the universal ribosomal protein uS15 family. As to quaternary structure, part of the 30S ribosomal subunit. Forms a bridge to the 50S subunit in the 70S ribosome, contacting the 23S rRNA.

Its function is as follows. One of the primary rRNA binding proteins, it binds directly to 16S rRNA where it helps nucleate assembly of the platform of the 30S subunit by binding and bridging several RNA helices of the 16S rRNA. Forms an intersubunit bridge (bridge B4) with the 23S rRNA of the 50S subunit in the ribosome. The chain is Small ribosomal subunit protein uS15 from Geobacillus thermodenitrificans (strain NG80-2).